Reading from the N-terminus, the 251-residue chain is Sugar fermentation stimulation protein homolog (251 aa).

This sequence belongs to the SfsA family.

In Prochlorococcus marinus (strain MIT 9313), this protein is Sugar fermentation stimulation protein homolog.